A 370-amino-acid polypeptide reads, in one-letter code: NAD-dependent histone deacetylase HST4 (370 aa).

The interval 1–27 is disordered; that stretch reads MKQKFVLPITPPSTAEKKPQTENRCNE. Residues 15 to 27 are compositionally biased toward basic and acidic residues; the sequence is AEKKPQTENRCNE. Positions 75–370 constitute a Deacetylase sirtuin-type domain; the sequence is RHHMDRDAGF…GDCQHVTSLL (296 aa). NAD(+) contacts are provided by residues 100–119 and 184–187; these read GAGI…EGIF and QNID. The active-site Proton acceptor is His-213. Zn(2+) contacts are provided by Cys-221, Cys-224, Cys-251, and Cys-254. NAD(+) is bound by residues 310–312, 340–342, and Cys-363; these read GTS and NTS.

It belongs to the sirtuin family. Class I subfamily. Zn(2+) serves as cofactor.

The protein resides in the nucleus. It carries out the reaction N(6)-acetyl-L-lysyl-[protein] + NAD(+) + H2O = 2''-O-acetyl-ADP-D-ribose + nicotinamide + L-lysyl-[protein]. Functionally, NAD-dependent histone deacetylase, which contributes together with HST3 to histone H3 'Lys-56' deacetylation, regulation of telomeric silencing, proper cell cycle progression, DNA damage control, DNA recombination, and genomic maintenance. The chain is NAD-dependent histone deacetylase HST4 (HST4) from Saccharomyces cerevisiae (strain ATCC 204508 / S288c) (Baker's yeast).